We begin with the raw amino-acid sequence, 185 residues long: Kunitz-type serine protease inhibitor DrTI (185 aa).

2 disulfide bridges follow: Cys44–Cys89 and Cys139–Cys147.

It belongs to the protease inhibitor I3 (leguminous Kunitz-type inhibitor) family.

It localises to the secreted. Functionally, inhibits bovine trypsin and human plasma kallikrein. This chain is Kunitz-type serine protease inhibitor DrTI, found in Delonix regia (Royal poinciana).